The chain runs to 459 residues: tRNA modification GTPase MnmE (459 aa).

Residues R22, E85, and R124 each coordinate (6S)-5-formyl-5,6,7,8-tetrahydrofolate. The region spanning 221-380 (GLSTVIVGRP…LEIQIKDLFF (160 aa)) is the TrmE-type G domain. N231 is a binding site for K(+). Residues 231 to 236 (NVGKSS), 250 to 256 (TEVAGTT), and 275 to 278 (DTAG) contribute to the GTP site. S235 provides a ligand contact to Mg(2+). K(+) contacts are provided by T250, V252, and T255. A Mg(2+)-binding site is contributed by T256. (6S)-5-formyl-5,6,7,8-tetrahydrofolate is bound at residue K459.

The protein belongs to the TRAFAC class TrmE-Era-EngA-EngB-Septin-like GTPase superfamily. TrmE GTPase family. In terms of assembly, homodimer. Heterotetramer of two MnmE and two MnmG subunits. K(+) is required as a cofactor.

It is found in the cytoplasm. Functionally, exhibits a very high intrinsic GTPase hydrolysis rate. Involved in the addition of a carboxymethylaminomethyl (cmnm) group at the wobble position (U34) of certain tRNAs, forming tRNA-cmnm(5)s(2)U34. This Staphylococcus epidermidis (strain ATCC 35984 / DSM 28319 / BCRC 17069 / CCUG 31568 / BM 3577 / RP62A) protein is tRNA modification GTPase MnmE.